A 124-amino-acid chain; its full sequence is Large ribosomal subunit protein bL12 (124 aa).

Belongs to the bacterial ribosomal protein bL12 family. In terms of assembly, homodimer. Part of the ribosomal stalk of the 50S ribosomal subunit. Forms a multimeric L10(L12)X complex, where L10 forms an elongated spine to which 2 to 4 L12 dimers bind in a sequential fashion. Binds GTP-bound translation factors.

Its function is as follows. Forms part of the ribosomal stalk which helps the ribosome interact with GTP-bound translation factors. Is thus essential for accurate translation. This Xanthobacter autotrophicus (strain ATCC BAA-1158 / Py2) protein is Large ribosomal subunit protein bL12.